We begin with the raw amino-acid sequence, 525 residues long: MLKKQALSGIRRFSLATKQSFVKTSYKLPRKSWLNTAKFNTIRYASTEAAKHNKGSIKQVIGAVVDCQFEDADSLPSILNALEVKLPDNKRLVLEVAQHVGENTVRTIAMDGTEGLVRGTAVIDTGSPISIPVGPGTLGRIMNVIGEPVDERGPIKAVKYSPIHADAPSFEEQSTTPEILETGIKVVDLLAPYARGGKIGLFGGAGVGKTVFIQELINNIAKAHGGYSVFTGVGERTREGNDLYREMQETGVIKLEGESKAALVFGQMNEPPGARARVALTGLTVAEYFRDIEGQDVLLFIDNIFRFTQAGSEVSALLGRIPSAVGYQPTLATDMGAMQERITTTKKGSITSVQAVYVPADDLTDPAPATTFAHLDATTVLSRSISELGIYPAVDPLDSKSRMMDPRILGEEHYNLAGSVQQMLQEYKSLQDIIAILGMDELSEADKLTVERARKVQRFLSQPFAVAEVFTGIEGRLVSLKDTIRSFKEILEGKHDSLPESAFYMVGSIDDAVKKAEKIAQELAA.

Residues M1–Y44 constitute a mitochondrion transit peptide. G203–T210 is a binding site for ATP.

It belongs to the ATPase alpha/beta chains family. As to quaternary structure, F-type ATPases have 2 components, CF(1) - the catalytic core - and CF(0) - the membrane proton channel. CF(1) has five subunits: alpha(3), beta(3), gamma(1), delta(1), epsilon(1). CF(0) has three main subunits: a, b and c.

It is found in the mitochondrion. It localises to the mitochondrion inner membrane. It carries out the reaction ATP + H2O + 4 H(+)(in) = ADP + phosphate + 5 H(+)(out). In terms of biological role, mitochondrial membrane ATP synthase (F(1)F(0) ATP synthase or Complex V) produces ATP from ADP in the presence of a proton gradient across the membrane which is generated by electron transport complexes of the respiratory chain. F-type ATPases consist of two structural domains, F(1) - containing the extramembraneous catalytic core, and F(0) - containing the membrane proton channel, linked together by a central stalk and a peripheral stalk. During catalysis, ATP synthesis in the catalytic domain of F(1) is coupled via a rotary mechanism of the central stalk subunits to proton translocation. Subunits alpha and beta form the catalytic core in F(1). Rotation of the central stalk against the surrounding alpha(3)beta(3) subunits leads to hydrolysis of ATP in three separate catalytic sites on the beta subunits. The chain is ATP synthase subunit beta, mitochondrial (atp2) from Schizosaccharomyces pombe (strain 972 / ATCC 24843) (Fission yeast).